Consider the following 573-residue polypeptide: 3-oxosteroid 1-dehydrogenase (573 aa).

7–36 (DLIVVGSGAGACWAPIRAQEQGLKTLVVEK) serves as a coordination point for FAD.

The protein belongs to the FAD-dependent oxidoreductase 2 family. 3-oxosteroid dehydrogenase subfamily. Requires FAD as cofactor.

It localises to the cell inner membrane. It carries out the reaction a 3-oxosteroid + A = a 3-oxo-Delta(1)-steroid + AH2. Its pathway is lipid metabolism; steroid degradation. Dehydrogenates steroids by introducing a double bond in steroid ring A. The chain is 3-oxosteroid 1-dehydrogenase from Comamonas testosteroni (Pseudomonas testosteroni).